The primary structure comprises 1256 residues: SNF2 domain-containing protein CLASSY 1 (1256 aa).

2 disordered regions span residues 269 to 290 and 448 to 467; these read ELRR…EIQP and GNVV…VSRE. The segment covering 278–290 has biased composition (basic and acidic residues); that stretch reads GRPERYGDSEIQP. A compositionally biased stretch (basic residues) spans 451–463; the sequence is VHKRNGPHSRIRS. Residues 699–898 form the Helicase ATP-binding domain; that stretch reads DPSSDKIGGC…FNTLCLARPK (200 aa). 712-719 provides a ligand contact to ATP; that stretch reads HTPGAGKT. Positions 849-852 match the DEAH box motif; sequence DEGH. The 162-residue stretch at 1061–1222 folds into the Helicase C-terminal domain; the sequence is FVLNLVFRVV…EFVEDPSQWQ (162 aa).

The protein belongs to the helicase family. In terms of assembly, interacts with NRPD1, NRPD3 and SHH1.

The protein localises to the nucleus. It is found in the nucleoplasm. Its subcellular location is the nucleolus. In terms of biological role, probable chromatin remodeling factor. Required for the initial establishment of DNA methylation and for accumulation of 24-nt siRNAs. May act on RNA templates by remodeling ribonucleoprotein structures and thereby influencing the availability of the RNA to polymerases. This chain is SNF2 domain-containing protein CLASSY 1 (CLSY1), found in Arabidopsis thaliana (Mouse-ear cress).